Reading from the N-terminus, the 177-residue chain is Adenine phosphoribosyltransferase (177 aa).

Belongs to the purine/pyrimidine phosphoribosyltransferase family. As to quaternary structure, homodimer.

Its subcellular location is the cytoplasm. The enzyme catalyses AMP + diphosphate = 5-phospho-alpha-D-ribose 1-diphosphate + adenine. It participates in purine metabolism; AMP biosynthesis via salvage pathway; AMP from adenine: step 1/1. In terms of biological role, catalyzes a salvage reaction resulting in the formation of AMP, that is energically less costly than de novo synthesis. The protein is Adenine phosphoribosyltransferase of Cutibacterium acnes (strain DSM 16379 / KPA171202) (Propionibacterium acnes).